The primary structure comprises 251 residues: 5'-nucleotidase SurE (251 aa).

A divalent metal cation is bound by residues Asp-8, Asp-9, Ser-39, and Asn-95.

The protein belongs to the SurE nucleotidase family. A divalent metal cation serves as cofactor.

The protein resides in the cytoplasm. It carries out the reaction a ribonucleoside 5'-phosphate + H2O = a ribonucleoside + phosphate. Its function is as follows. Nucleotidase that shows phosphatase activity on nucleoside 5'-monophosphates. In Ralstonia nicotianae (strain ATCC BAA-1114 / GMI1000) (Ralstonia solanacearum), this protein is 5'-nucleotidase SurE.